The chain runs to 917 residues: Intercellular adhesion molecule 5 (917 aa).

Residues 1–31 (MPGPSPGLRRALLGLWAALGLGILGISAVAL) form the signal peptide. At 32–833 (EPFWADLQPR…RITVRVAGPW (802 aa)) the chain is on the extracellular side. Ig-like C2-type domains lie at 48-130 (GGSL…PLPS), 135-235 (GENF…SLIA), 242-329 (DSER…LLTL), 337-402 (GKMV…SSEL), 408-486 (PRLD…VTLT), 491-567 (PALD…VAVT), 572-651 (PSFE…NRHG), 665-738 (PQMD…RTVT), and 745-828 (PVVA…ITVR). Residue Asn-54 is glycosylated (N-linked (GlcNAc...) (high mannose) asparagine). Disulfide bonds link Cys-55-Cys-99 and Cys-59-Cys-103. 2 N-linked (GlcNAc...) asparagine glycosylation sites follow: Asn-74 and Asn-137. The cysteines at positions 142 and 198 are disulfide-linked. Thr-182 bears the Phosphothreonine mark. 6 N-linked (GlcNAc...) asparagine glycosylation sites follow: Asn-195, Asn-214, Asn-274, Asn-316, Asn-371, and Asn-397. The cysteines at positions 249 and 302 are disulfide-linked. A disulfide bond links Cys-344 and Cys-383. Disulfide bonds link Cys-415/Cys-470, Cys-498/Cys-551, and Cys-579/Cys-644. Residues Asn-582 and Asn-645 are each glycosylated (N-linked (GlcNAc...) asparagine). An intrachain disulfide couples Cys-672 to Cys-724. N-linked (GlcNAc...) asparagine glycosylation is found at Asn-762, Asn-793, and Asn-794. Residues Cys-767 and Cys-812 are joined by a disulfide bond. Residues 834 to 854 (LWVAVGGAAGGAALLAAGAGL) traverse the membrane as a helical segment. The Cytoplasmic portion of the chain corresponds to 855 to 917 (AFYVQSTACK…EVFAIQLTSS (63 aa)). The span at 884–893 (GAGGTPGAEG) shows a compositional bias: gly residues. Residues 884-908 (GAGGTPGAEGGAETPGTAESPADGE) form a disordered region.

The protein belongs to the immunoglobulin superfamily. ICAM family. Glycosylation at Asn-54 is critical for functional folding. Expressed on neurons in the most rostral segment of the mammalian brain, the telencephalon.

It is found in the membrane. Functionally, ICAM proteins are ligands for the leukocyte adhesion protein LFA-1 (integrin alpha-L/beta-2). The polypeptide is Intercellular adhesion molecule 5 (Icam5) (Mus musculus (Mouse)).